We begin with the raw amino-acid sequence, 189 residues long: Crossover junction endodeoxyribonuclease RuvC (189 aa).

Catalysis depends on residues Asp9, Glu70, and Asp143. Residues Asp9, Glu70, and Asp143 each coordinate Mg(2+). The segment covering Met162 to Trp178 has biased composition (low complexity). Residues Met162–Arg189 form a disordered region. The span at Ala179–Arg189 shows a compositional bias: basic and acidic residues.

It belongs to the RuvC family. Homodimer which binds Holliday junction (HJ) DNA. The HJ becomes 2-fold symmetrical on binding to RuvC with unstacked arms; it has a different conformation from HJ DNA in complex with RuvA. In the full resolvosome a probable DNA-RuvA(4)-RuvB(12)-RuvC(2) complex forms which resolves the HJ. It depends on Mg(2+) as a cofactor.

The protein localises to the cytoplasm. The catalysed reaction is Endonucleolytic cleavage at a junction such as a reciprocal single-stranded crossover between two homologous DNA duplexes (Holliday junction).. In terms of biological role, the RuvA-RuvB-RuvC complex processes Holliday junction (HJ) DNA during genetic recombination and DNA repair. Endonuclease that resolves HJ intermediates. Cleaves cruciform DNA by making single-stranded nicks across the HJ at symmetrical positions within the homologous arms, yielding a 5'-phosphate and a 3'-hydroxyl group; requires a central core of homology in the junction. The consensus cleavage sequence is 5'-(A/T)TT(C/G)-3'. Cleavage occurs on the 3'-side of the TT dinucleotide at the point of strand exchange. HJ branch migration catalyzed by RuvA-RuvB allows RuvC to scan DNA until it finds its consensus sequence, where it cleaves and resolves the cruciform DNA. The sequence is that of Crossover junction endodeoxyribonuclease RuvC from Paenarthrobacter aurescens (strain TC1).